The following is a 1661-amino-acid chain: Microtubule cross-linking factor 2 (1661 aa).

Residues 1–187 (MEAPAAEPPV…EPSVAASSVG (187 aa)) are disordered. 2 stretches are compositionally biased toward low complexity: residues 76 to 94 (AVAP…VRTG) and 133 to 149 (LLGL…SAAG). Residues 167 to 176 (QQPPRPPASP) show a composition bias toward pro residues. The tract at residues 211–240 (PSGLVRELEELRSENDYLKDEIEELRAEML) is required for association with Golgi apparatus membrane. Coiled-coil stretches lie at residues 218 to 281 (LEEL…AERR) and 310 to 351 (SMRL…LQTE). Residues 353-373 (ERPREHSLKKRGTRSLGKADK) are disordered. 3 coiled-coil regions span residues 450-484 (LKLV…MKDH), 820-865 (IKEL…LKED), and 1083-1117 (SQEK…LQKA). Phosphoserine is present on Ser-1169. The tract at residues 1196-1221 (AFGFVSSEPGDPEKDTKEKPGLSSRD) is disordered. The segment covering 1206 to 1215 (DPEKDTKEKP) has biased composition (basic and acidic residues). The residue at position 1255 (Ser-1255) is a Phosphoserine. Disordered stretches follow at residues 1432–1456 (RPCC…DSSK), 1538–1563 (RAPS…ASYH), and 1636–1661 (HSPS…PPSE). The span at 1652–1661 (GEERALPPSE) shows a compositional bias: basic and acidic residues.

It belongs to the MTCL family. Interacts with CLASP1 and CLASP2. The C-terminal 25 kDa form occurs as a monomer. Post-translationally, proteolytically cleaved in primary hepatocytes into a C-terminal 80 kDa form. Proteolytically cleaved into a C-terminal SOGA 25 kDa form that is detected in plasma. Phosphorylated during mitosis in a CDK1-dependent manner.

The protein resides in the cytoplasm. The protein localises to the cytoskeleton. Its subcellular location is the golgi apparatus membrane. It localises to the midbody. It is found in the secreted. Its function is as follows. Microtubule-associated factor that enables integration of the centrosomal and Golgi-associated microtubules on the Golgi membrane, supporting directional migration. Preferentially acts on the perinuclear microtubules accumulated around the Golgi. Associates with the Golgi membrane through the N-terminal coiled-coil region and directly binds microtubules through the C-terminal domain. Required for faithful chromosome segregation during mitosis. Regulates autophagy by playing a role in the reduction of glucose production in an adiponectin- and insulin-dependent manner. The chain is Microtubule cross-linking factor 2 from Homo sapiens (Human).